The sequence spans 466 residues: Argininosuccinate lyase (466 aa).

2-(N(omega)-L-arginino)succinate contacts are provided by S27, N114, and T159. H160 acts as the Proton acceptor in catalysis. S281 acts as the Proton donor in catalysis. The 2-(N(omega)-L-arginino)succinate site is built by N289, Y321, Q326, and K329.

It belongs to the lyase 1 family. Argininosuccinate lyase subfamily. Homotetramer. Eye lens.

The enzyme catalyses 2-(N(omega)-L-arginino)succinate = fumarate + L-arginine. It functions in the pathway amino-acid biosynthesis; L-arginine biosynthesis; L-arginine from L-ornithine and carbamoyl phosphate: step 3/3. Its function is as follows. Delta crystallin, the principal crystallin in embryonic lens, is found only in birds and reptiles. This protein also functions as an enzymatically active argininosuccinate lyase. The polypeptide is Argininosuccinate lyase (ASL) (Anser anser anser (Western greylag goose)).